The primary structure comprises 263 residues: tRNA pseudouridine synthase A (263 aa).

Asp-53 (nucleophile) is an active-site residue. Tyr-111 is a binding site for substrate. Positions 232 to 263 (TAPGHGLISGRSNMTNGKLENNKTTNPCVTKY) are disordered. Positions 241-263 (GRSNMTNGKLENNKTTNPCVTKY) are enriched in polar residues.

It belongs to the tRNA pseudouridine synthase TruA family. Homodimer.

The catalysed reaction is uridine(38/39/40) in tRNA = pseudouridine(38/39/40) in tRNA. Its function is as follows. Formation of pseudouridine at positions 38, 39 and 40 in the anticodon stem and loop of transfer RNAs. The polypeptide is tRNA pseudouridine synthase A (Halalkalibacterium halodurans (strain ATCC BAA-125 / DSM 18197 / FERM 7344 / JCM 9153 / C-125) (Bacillus halodurans)).